We begin with the raw amino-acid sequence, 103 residues long: Co-chaperonin GroES (103 aa).

Belongs to the GroES chaperonin family. In terms of assembly, heptamer of 7 subunits arranged in a ring. Interacts with the chaperonin GroEL.

The protein resides in the cytoplasm. Together with the chaperonin GroEL, plays an essential role in assisting protein folding. The GroEL-GroES system forms a nano-cage that allows encapsulation of the non-native substrate proteins and provides a physical environment optimized to promote and accelerate protein folding. GroES binds to the apical surface of the GroEL ring, thereby capping the opening of the GroEL channel. The sequence is that of Co-chaperonin GroES from Thermosynechococcus vestitus (strain NIES-2133 / IAM M-273 / BP-1).